A 210-amino-acid polypeptide reads, in one-letter code: Orotate phosphoribosyltransferase (210 aa).

5-phospho-alpha-D-ribose 1-diphosphate contacts are provided by residues R94, K98, H100, and 120–128 (EDLISTGGS). Orotate is bound at residue S124.

This sequence belongs to the purine/pyrimidine phosphoribosyltransferase family. PyrE subfamily. In terms of assembly, homodimer. Mg(2+) is required as a cofactor.

It catalyses the reaction orotidine 5'-phosphate + diphosphate = orotate + 5-phospho-alpha-D-ribose 1-diphosphate. The protein operates within pyrimidine metabolism; UMP biosynthesis via de novo pathway; UMP from orotate: step 1/2. Functionally, catalyzes the transfer of a ribosyl phosphate group from 5-phosphoribose 1-diphosphate to orotate, leading to the formation of orotidine monophosphate (OMP). The chain is Orotate phosphoribosyltransferase from Halalkalibacterium halodurans (strain ATCC BAA-125 / DSM 18197 / FERM 7344 / JCM 9153 / C-125) (Bacillus halodurans).